Reading from the N-terminus, the 155-residue chain is Ribosome maturation factor RimP (155 aa).

The protein belongs to the RimP family.

It localises to the cytoplasm. Functionally, required for maturation of 30S ribosomal subunits. The polypeptide is Ribosome maturation factor RimP (Staphylococcus aureus (strain bovine RF122 / ET3-1)).